We begin with the raw amino-acid sequence, 149 residues long: NPC intracellular cholesterol transporter 2 (149 aa).

The signal sequence occupies residues 1–19; sequence MHFLAAAFLLLTLSASALA. 3 cysteine pairs are disulfide-bonded: Cys27/Cys140, Cys42/Cys47, and Cys93/Cys99. Residue Asn58 is glycosylated (N-linked (GlcNAc...) asparagine). At Lys116 the chain carries N6-acetyllysine.

Belongs to the NPC2 family. As to quaternary structure, interacts with NPC1 (via the second lumenal domain) in a cholestrol-dependent manner. Interacts with NUS1/NgBR, the interaction stabilizes NCP2 and regulates cholesterol trafficking. Interacts with DHDDS. Interacts with NEDD4L (via C2 domain). Interacts with NPC1L1. Post-translationally, N-glycosylated. Found in the epididymal fluid as a 19 kDa glycoprotein that is processed during its passage through the epididymis into a 16 kDa protein. As to expression, found in the fluid from the distal caput to cauda epididymis, not detected in the rete testis and the proximal and middle caput epididymal fluids (at protein level).

It localises to the secreted. The protein resides in the endoplasmic reticulum. The protein localises to the lysosome. The enzyme catalyses cholesterol(in) = cholesterol(out). In terms of biological role, intracellular cholesterol transporter which acts in concert with NPC1 and plays an important role in the egress of cholesterol from the lysosomal compartment. Unesterified cholesterol that has been released from LDLs in the lumen of the late endosomes/lysosomes is transferred by NPC2 to the cholesterol-binding pocket in the N-terminal domain of NPC1. May bind and mobilize cholesterol that is associated with membranes. NPC2 binds cholesterol with a 1:1 stoichiometry. Can bind a variety of sterols, including lathosterol, desmosterol and the plant sterols stigmasterol and beta-sitosterol. The secreted form of NCP2 regulates biliary cholesterol secretion via stimulation of ABCG5/ABCG8-mediated cholesterol transport. In Sus scrofa (Pig), this protein is NPC intracellular cholesterol transporter 2.